A 157-amino-acid polypeptide reads, in one-letter code: ABA-responsive protein ABR17 (157 aa).

The protein belongs to the BetVI family.

This is ABA-responsive protein ABR17 from Pisum sativum (Garden pea).